A 780-amino-acid chain; its full sequence is GATOR2 complex protein WDR24 (780 aa).

6 WD repeats span residues 67–107, 113–153, 156–196, 200–240, 244–286, and 290–333; these read SLNF…RNKQ, EHKR…SVST, GQSE…RCER, AHNG…AKEI, QTIA…IPFA, and EHKD…IDRA. The segment at 708-730 adopts a C4-type zinc-finger fold; it reads NCSNCKRPMSNKGWICDRCRQCA. Positions 709, 712, 723, 726, 733, 736, 747, 750, 752, 755, 758, 769, 773, 775, and 777 each coordinate Zn(2+). The RING-type; atypical zinc-finger motif lies at 731–780; it reads SMCAVCHHVVKGLFVWCQGCCHGGHLQHIMNWMQNNCYCPAGCGHVCEYS.

Belongs to the WD repeat WDR24 family. Component of the GATOR2 subcomplex, composed of MIOS, SEC13, SEH1L, WDR24 and WDR59. The GATOR2 complex interacts with CASTOR1 and CASTOR2; the interaction is negatively regulated by arginine. The GATOR2 complex interacts with SESN1, SESN2 and SESN3; the interaction is negatively regulated by amino acids.

It localises to the lysosome membrane. It carries out the reaction S-ubiquitinyl-[E2 ubiquitin-conjugating enzyme]-L-cysteine + [acceptor protein]-L-lysine = [E2 ubiquitin-conjugating enzyme]-L-cysteine + N(6)-ubiquitinyl-[acceptor protein]-L-lysine.. Its pathway is protein modification; protein ubiquitination. Its activity is regulated as follows. The GATOR2 complex is negatively regulated by the upstream amino acid sensors CASTOR1 and SESN2, which sequester the GATOR2 complex in absence of amino acids. In the presence of abundant amino acids, GATOR2 is released from CASTOR1 and SESN2 and activated. Its function is as follows. Catalytic component of the GATOR2 complex, a multiprotein complex that acts as an activator of the amino acid-sensing branch of the mTORC1 signaling pathway. The GATOR2 complex indirectly activates mTORC1 through the inhibition of the GATOR1 subcomplex. GATOR2 probably acts as an E3 ubiquitin-protein ligase toward GATOR1. In the presence of abundant amino acids, the GATOR2 complex mediates ubiquitination of the NPRL2 core component of the GATOR1 complex, leading to GATOR1 inactivation. In the absence of amino acids, GATOR2 is inhibited, activating the GATOR1 complex. In addition to its role in regulation of the mTORC1 complex, promotes the acidification of lysosomes and facilitates autophagic flux. Within the GATOR2 complex, WDR24 constitutes the catalytic subunit that mediates 'Lys-6'-linked ubiquitination of NPRL2. This chain is GATOR2 complex protein WDR24, found in Xenopus laevis (African clawed frog).